The chain runs to 1149 residues: Eukaryotic translation initiation factor 3 subunit A (1149 aa).

The 182-residue stretch at 317 to 498 (IQRMTSHVLI…HSVHFGTDLS (182 aa)) folds into the PCI domain. 2 disordered regions span residues 496-515 (DLSE…QSMP) and 811-1149 (EEER…KHHR). Over residues 811 to 885 (EEERRRIEEE…APRGEKEERG (75 aa)) the composition is skewed to basic and acidic residues. Residues 886-895 (GGGGGGGAWR) are compositionally biased toward gly residues. Over residues 908–924 (AKPESDWRNAREAREPA) the composition is skewed to basic and acidic residues. Low complexity predominate over residues 925–937 (PESAGASSAAAPA). 3 stretches are compositionally biased toward basic and acidic residues: residues 961-970 (RPPRGDDREP), 1005-1095 (GPMR…DRRG), and 1113-1132 (EPAK…KEAR).

It belongs to the eIF-3 subunit A family. Component of the eukaryotic translation initiation factor 3 (eIF-3) complex.

The protein localises to the cytoplasm. Its function is as follows. RNA-binding component of the eukaryotic translation initiation factor 3 (eIF-3) complex, which is involved in protein synthesis of a specialized repertoire of mRNAs and, together with other initiation factors, stimulates binding of mRNA and methionyl-tRNAi to the 40S ribosome. The eIF-3 complex specifically targets and initiates translation of a subset of mRNAs involved in cell proliferation. In Culex quinquefasciatus (Southern house mosquito), this protein is Eukaryotic translation initiation factor 3 subunit A.